The chain runs to 544 residues: (E,E)-germacrene B synthase (544 aa).

Mg(2+)-binding residues include Asp-296, Asp-300, and Glu-449. Residues 296-300 (DDTFD) carry the DDXXD motif motif.

Belongs to the terpene synthase family. It depends on Mg(2+) as a cofactor. Mn(2+) serves as cofactor.

It is found in the cytoplasm. It carries out the reaction (2E,6E)-farnesyl diphosphate = (1E,4E)-germacrene B + diphosphate. The protein operates within secondary metabolite biosynthesis; terpenoid biosynthesis. Involved in the biosynthesis of germacrene B. The sequence is that of (E,E)-germacrene B synthase (SSTLH1) from Solanum habrochaites (Wild tomato).